Here is a 131-residue protein sequence, read N- to C-terminus: L-ectoine synthase (131 aa).

It belongs to the ectoine synthase family.

The enzyme catalyses (2S)-4-acetamido-2-aminobutanoate = L-ectoine + H2O. The protein operates within amine and polyamine biosynthesis; ectoine biosynthesis; L-ectoine from L-aspartate 4-semialdehyde: step 3/3. Its function is as follows. Catalyzes the circularization of gamma-N-acetyl-alpha,gamma-diaminobutyric acid (ADABA) to ectoine (1,4,5,6-tetrahydro-2-methyl-4-pyrimidine carboxylic acid), which is an excellent osmoprotectant. This Wolinella succinogenes (strain ATCC 29543 / DSM 1740 / CCUG 13145 / JCM 31913 / LMG 7466 / NCTC 11488 / FDC 602W) (Vibrio succinogenes) protein is L-ectoine synthase.